A 115-amino-acid chain; its full sequence is U3-lycotoxin-Ls1f (115 aa).

The N-terminal stretch at 1–20 (MKFVLLFGVLLVTLFSYSSA) is a signal peptide. Residues 21–44 (EMLDDFDQADEDELLSLIEKEEAR) constitute a propeptide that is removed on maturation. Cystine bridges form between cysteine 48/cysteine 63, cysteine 55/cysteine 72, cysteine 62/cysteine 87, and cysteine 74/cysteine 85.

The protein belongs to the neurotoxin 19 (CSTX) family. 01 subfamily. As to expression, expressed by the venom gland.

It is found in the secreted. This is U3-lycotoxin-Ls1f from Lycosa singoriensis (Wolf spider).